The following is a 377-amino-acid chain: Bradyzoite pseudokinase 1 (377 aa).

An N-terminal signal peptide occupies residues 1–26; it reads MANTSVRRRQLLSSVLLLQWLTTVLG. The disordered stretch occupies residues 39-58; sequence HGQFPSLRRTEGVSQSGSGH. Residues 48–354 enclose the Protein kinase domain; it reads TEGVSQSGSG…IEEIMKDPLF (307 aa).

This sequence belongs to the protein kinase superfamily. STE Ser/Thr protein kinase family. WNG subfamily. In terms of assembly, forms a complex composed of BPK1, MCP4, MAG1, GRA8 and GRA9. Interacts with MCP4. Interacts with MAG1. Interacts with GRA8. Interacts with GRA9.

The protein localises to the secreted. Functionally, required for the growth, maintenance, and/or stability, and thus infectivity, of bradyzoite cysts. The sequence is that of Bradyzoite pseudokinase 1 from Toxoplasma gondii.